A 500-amino-acid polypeptide reads, in one-letter code: Cytochrome P450 2D26 (500 aa).

Serine 249 carries the phosphoserine modification. Heme is bound at residue cysteine 446.

This sequence belongs to the cytochrome P450 family. It depends on heme as a cofactor.

The protein resides in the endoplasmic reticulum membrane. The protein localises to the microsome membrane. It catalyses the reaction an organic molecule + reduced [NADPH--hemoprotein reductase] + O2 = an alcohol + oxidized [NADPH--hemoprotein reductase] + H2O + H(+). Its function is as follows. Cytochromes P450 are a group of heme-thiolate monooxygenases. In liver microsomes, this enzyme is involved in an NADPH-dependent electron transport pathway. It oxidizes a variety of structurally unrelated compounds, including steroids, fatty acids, and xenobiotics. This is Cytochrome P450 2D26 from Mus musculus (Mouse).